A 610-amino-acid chain; its full sequence is Elongation factor 4 (610 aa).

A tr-type G domain is found at 11 to 193 (EKIRNFSIIA…QIVEKVPAPT (183 aa)). Residues 23-28 (DHGKST) and 140-143 (NKID) contribute to the GTP site.

It belongs to the TRAFAC class translation factor GTPase superfamily. Classic translation factor GTPase family. LepA subfamily.

It localises to the cell membrane. It catalyses the reaction GTP + H2O = GDP + phosphate + H(+). Functionally, required for accurate and efficient protein synthesis under certain stress conditions. May act as a fidelity factor of the translation reaction, by catalyzing a one-codon backward translocation of tRNAs on improperly translocated ribosomes. Back-translocation proceeds from a post-translocation (POST) complex to a pre-translocation (PRE) complex, thus giving elongation factor G a second chance to translocate the tRNAs correctly. Binds to ribosomes in a GTP-dependent manner. The sequence is that of Elongation factor 4 from Streptococcus suis (strain 98HAH33).